The primary structure comprises 139 residues: Large ribosomal subunit protein uL13 (139 aa).

This sequence belongs to the universal ribosomal protein uL13 family. As to quaternary structure, part of the 50S ribosomal subunit.

Functionally, this protein is one of the early assembly proteins of the 50S ribosomal subunit, although it is not seen to bind rRNA by itself. It is important during the early stages of 50S assembly. The protein is Large ribosomal subunit protein uL13 of Nitratiruptor sp. (strain SB155-2).